A 191-amino-acid chain; its full sequence is Large ribosomal subunit protein uL5 (191 aa).

It belongs to the universal ribosomal protein uL5 family. As to quaternary structure, part of the 50S ribosomal subunit; part of the 5S rRNA/L5/L18/L25 subcomplex. Contacts the 5S rRNA and the P site tRNA. Forms a bridge to the 30S subunit in the 70S ribosome.

Functionally, this is one of the proteins that bind and probably mediate the attachment of the 5S RNA into the large ribosomal subunit, where it forms part of the central protuberance. In the 70S ribosome it contacts protein S13 of the 30S subunit (bridge B1b), connecting the 2 subunits; this bridge is implicated in subunit movement. Contacts the P site tRNA; the 5S rRNA and some of its associated proteins might help stabilize positioning of ribosome-bound tRNAs. This is Large ribosomal subunit protein uL5 from Thermobifida fusca (strain YX).